The sequence spans 270 residues: Phosphatidate cytidylyltransferase (270 aa).

8 consecutive transmembrane segments (helical) span residues 17-37, 55-75, 81-101, 104-124, 129-149, 170-190, 193-213, and 248-268; these read FVVL…AILI, FFYV…FEEP, ILFI…SQVF, VAAF…FLPI, GAAN…FAYF, EGVI…RLVV, LLSV…TVAI, and IDGL…LEGV.

It belongs to the CDS family.

It localises to the cell membrane. It carries out the reaction a 1,2-diacyl-sn-glycero-3-phosphate + CTP + H(+) = a CDP-1,2-diacyl-sn-glycerol + diphosphate. It participates in phospholipid metabolism; CDP-diacylglycerol biosynthesis; CDP-diacylglycerol from sn-glycerol 3-phosphate: step 3/3. This is Phosphatidate cytidylyltransferase (cdsA) from Thermotoga maritima (strain ATCC 43589 / DSM 3109 / JCM 10099 / NBRC 100826 / MSB8).